We begin with the raw amino-acid sequence, 409 residues long: TAR DNA-binding protein 43 (409 aa).

RRM domains follow at residues 105–200 and 191–262; these read SDLI…RCTE and RKVF…TAEP. 2 disordered regions span residues 260-302 and 341-409; these read AEPK…NQGG and SQQN…GWGM. Positions 261–274 are enriched in basic and acidic residues; sequence EPKHNNNRQLERGG. Positions 281–292 are enriched in polar residues; the sequence is FGNQGYPNSRPS. 2 stretches are compositionally biased toward low complexity: residues 341–387 and 395–409; these read SQQN…PNAG and GFSS…GWGM.

As to quaternary structure, homodimer.

It localises to the nucleus. The protein resides in the cytoplasm. It is found in the stress granule. The protein localises to the mitochondrion. Functionally, probably involved in transcriptional repression. May play a role in the maintenance of the circadian clock periodicity. This chain is TAR DNA-binding protein 43 (tardbp), found in Xenopus tropicalis (Western clawed frog).